A 337-amino-acid chain; its full sequence is Thiazole synthase (337 aa).

The interval 1-41 (MSQHPLRPAGSRPGDSPPDGSCPDGLAGGGSAVGGGGGGEA) is disordered. Low complexity predominate over residues 10 to 25 (GSRPGDSPPDGSCPDG). A compositionally biased stretch (gly residues) spans 26–41 (LAGGGSAVGGGGGGEA). Lysine 144 acts as the Schiff-base intermediate with DXP in catalysis. 1-deoxy-D-xylulose 5-phosphate-binding positions include glycine 205, 231–232 (AG), and 253–254 (NT). Positions 302–337 (FLGAHPSPASHPSPASPVPSVSRATSPAAVVGEASR) are disordered. A compositionally biased stretch (low complexity) spans 319 to 337 (VPSVSRATSPAAVVGEASR).

The protein belongs to the ThiG family. In terms of assembly, homotetramer. Forms heterodimers with either ThiH or ThiS.

The protein resides in the cytoplasm. It carries out the reaction [ThiS sulfur-carrier protein]-C-terminal-Gly-aminoethanethioate + 2-iminoacetate + 1-deoxy-D-xylulose 5-phosphate = [ThiS sulfur-carrier protein]-C-terminal Gly-Gly + 2-[(2R,5Z)-2-carboxy-4-methylthiazol-5(2H)-ylidene]ethyl phosphate + 2 H2O + H(+). Its pathway is cofactor biosynthesis; thiamine diphosphate biosynthesis. Functionally, catalyzes the rearrangement of 1-deoxy-D-xylulose 5-phosphate (DXP) to produce the thiazole phosphate moiety of thiamine. Sulfur is provided by the thiocarboxylate moiety of the carrier protein ThiS. In vitro, sulfur can be provided by H(2)S. The polypeptide is Thiazole synthase (Frankia casuarinae (strain DSM 45818 / CECT 9043 / HFP020203 / CcI3)).